Here is a 493-residue protein sequence, read N- to C-terminus: uncharacterized protein (493 aa).

8–37 (DFLVVGGGTCGCVVAARLSEDPSATVMLLE) contributes to the FAD binding site. His-429 functions as the Proton acceptor in the catalytic mechanism.

This sequence belongs to the GMC oxidoreductase family. The cofactor is FAD.

This is an uncharacterized protein from Rhodococcus erythropolis (Arthrobacter picolinophilus).